Here is a 134-residue protein sequence, read N- to C-terminus: MATNVKKVKKLRPKNVTVGIAHIHSSHQNTIISFTDKQGNVISWASSGSVGFKGTKKKTAYAATLATAAAAQKAREHGIREVIVELKGTGQGKEAARKQIITSGLNILLTKDVTPVPHNGTRPPRKWFKRQEKR.

The interval Thr-114 to Arg-134 is disordered. Positions Pro-123–Arg-134 are enriched in basic residues.

Belongs to the universal ribosomal protein uS11 family. Part of the 30S ribosomal subunit. Interacts with proteins S7 and S18. Binds to IF-3.

Its function is as follows. Located on the platform of the 30S subunit, it bridges several disparate RNA helices of the 16S rRNA. Forms part of the Shine-Dalgarno cleft in the 70S ribosome. This chain is Small ribosomal subunit protein uS11, found in Mesomycoplasma hyopneumoniae (strain J / ATCC 25934 / NCTC 10110) (Mycoplasma hyopneumoniae).